The chain runs to 521 residues: Sphingolipid C9-methyltransferase 2 (521 aa).

2 helical membrane-spanning segments follow: residues 60–80 (VLIS…GGGF) and 85–105 (FFAI…ISAI). S-adenosyl-L-methionine-binding positions include 225 to 226 (YT), 262 to 270 (MLDIGCGWG), 288 to 293 (TLGRNQ), and 318 to 319 (YR).

It belongs to the CFA/CMAS family.

Its subcellular location is the membrane. The enzyme catalyses a (4E,8E)-4-sphinga-4,8-dienine ceramide + S-adenosyl-L-methionine = a 9-methyl-(4E,8E)-sphinga-4,8-dienine ceramide + S-adenosyl-L-homocysteine + H(+). Its pathway is lipid metabolism; sphingolipid metabolism. Functionally, catalyzes methylation of the sphingoid base component of glucosylceramides (GluCers) at the C9-position. Sphingolipid C9-methylation requires 4,8-desaturated ceramides as substrates. Glucosylceramides play important roles in growth, differentiation and pathogenicity. The methyl group at the C9-position distinguishes fungal glucosylceramides from those of plants and animals and may thus play a role in host-pathogen interactions enabling the host to recognize the fungal attack and initiate specific defense responses. However, C-9 methylation of GlcCers is not essential for the sensitivity of F.graminearum to plant defensins MsDef1 and RsAFP2. This chain is Sphingolipid C9-methyltransferase 2, found in Gibberella zeae (strain ATCC MYA-4620 / CBS 123657 / FGSC 9075 / NRRL 31084 / PH-1) (Wheat head blight fungus).